We begin with the raw amino-acid sequence, 315 residues long: 4-hydroxy-3-methylbut-2-enyl diphosphate reductase (315 aa).

Cys-18 contacts [4Fe-4S] cluster. The (2E)-4-hydroxy-3-methylbut-2-enyl diphosphate site is built by His-47 and His-80. The dimethylallyl diphosphate site is built by His-47 and His-80. Residues His-47 and His-80 each coordinate isopentenyl diphosphate. Residue Cys-102 coordinates [4Fe-4S] cluster. Residue His-130 coordinates (2E)-4-hydroxy-3-methylbut-2-enyl diphosphate. His-130 contacts dimethylallyl diphosphate. Residue His-130 coordinates isopentenyl diphosphate. Glu-132 (proton donor) is an active-site residue. Thr-171 is a (2E)-4-hydroxy-3-methylbut-2-enyl diphosphate binding site. Cys-201 contributes to the [4Fe-4S] cluster binding site. (2E)-4-hydroxy-3-methylbut-2-enyl diphosphate-binding residues include Ser-229, Ser-230, Asn-231, and Ser-274. Residues Ser-229, Ser-230, Asn-231, and Ser-274 each coordinate dimethylallyl diphosphate. The isopentenyl diphosphate site is built by Ser-229, Ser-230, Asn-231, and Ser-274.

Belongs to the IspH family. It depends on [4Fe-4S] cluster as a cofactor.

It catalyses the reaction isopentenyl diphosphate + 2 oxidized [2Fe-2S]-[ferredoxin] + H2O = (2E)-4-hydroxy-3-methylbut-2-enyl diphosphate + 2 reduced [2Fe-2S]-[ferredoxin] + 2 H(+). The enzyme catalyses dimethylallyl diphosphate + 2 oxidized [2Fe-2S]-[ferredoxin] + H2O = (2E)-4-hydroxy-3-methylbut-2-enyl diphosphate + 2 reduced [2Fe-2S]-[ferredoxin] + 2 H(+). It functions in the pathway isoprenoid biosynthesis; dimethylallyl diphosphate biosynthesis; dimethylallyl diphosphate from (2E)-4-hydroxy-3-methylbutenyl diphosphate: step 1/1. The protein operates within isoprenoid biosynthesis; isopentenyl diphosphate biosynthesis via DXP pathway; isopentenyl diphosphate from 1-deoxy-D-xylulose 5-phosphate: step 6/6. Catalyzes the conversion of 1-hydroxy-2-methyl-2-(E)-butenyl 4-diphosphate (HMBPP) into a mixture of isopentenyl diphosphate (IPP) and dimethylallyl diphosphate (DMAPP). Acts in the terminal step of the DOXP/MEP pathway for isoprenoid precursor biosynthesis. The sequence is that of 4-hydroxy-3-methylbut-2-enyl diphosphate reductase from Hyphomonas neptunium (strain ATCC 15444).